The sequence spans 506 residues: Nucleoside import ATP-binding protein NupA (506 aa).

2 consecutive ABC transporter domains span residues 7–242 (IQMI…VGRS) and 259–503 (LEIK…VGGN). 39–46 (GENGAGKS) serves as a coordination point for ATP.

It belongs to the ABC transporter superfamily. In terms of assembly, the complex is composed of two ATP-binding proteins (NupA), two transmembrane proteins (NupB and NupC) and a solute-binding protein (BmpA).

The protein localises to the cell membrane. Its function is as follows. Part of an ABC transporter complex involved in the uptake of all common nucleosides. Responsible for energy coupling to the transport system. In Lactococcus lactis subsp. cremoris (strain MG1363), this protein is Nucleoside import ATP-binding protein NupA.